Consider the following 131-residue polypeptide: MKKTILINSRLSEVIASMGHTDTIAIADSGLPIPKGVERIDLALTRDIPRFLDTLRVILSELCVEEAIIATEMKEKSPETYAELLKILGNIPIKEVSHEELKVMTKECVAVVRTGEYTPYCNIILRSGVVF.

Residue His-20 is the Proton donor of the active site. Residues Asp-28, His-98, and 120-122 (YCN) each bind substrate.

It belongs to the RbsD / FucU family. RbsD subfamily. As to quaternary structure, homodecamer.

The protein resides in the cytoplasm. It carries out the reaction beta-D-ribopyranose = beta-D-ribofuranose. It participates in carbohydrate metabolism; D-ribose degradation; D-ribose 5-phosphate from beta-D-ribopyranose: step 1/2. Its function is as follows. Catalyzes the interconversion of beta-pyran and beta-furan forms of D-ribose. The protein is D-ribose pyranase of Coprothermobacter proteolyticus (strain ATCC 35245 / DSM 5265 / OCM 4 / BT).